Consider the following 307-residue polypeptide: Glutaminase (307 aa).

Positions 67, 117, 161, 168, 192, 243, and 261 each coordinate substrate.

The protein belongs to the glutaminase family. As to quaternary structure, homotetramer.

The enzyme catalyses L-glutamine + H2O = L-glutamate + NH4(+). The chain is Glutaminase from Streptomyces coelicolor (strain ATCC BAA-471 / A3(2) / M145).